A 197-amino-acid chain; its full sequence is Probable GTP-binding protein EngB (197 aa).

The EngB-type G domain maps to 25 to 197; that stretch reads SAPEIAFAGR…VRDEFFKFTR (173 aa). Residues 33–40, 60–64, 79–82, 146–149, and 177–179 each bind GTP; these read GRSNVGKS, GCTRQ, DLPG, TKID, and MSI. S40 and T62 together coordinate Mg(2+).

This sequence belongs to the TRAFAC class TrmE-Era-EngA-EngB-Septin-like GTPase superfamily. EngB GTPase family. Mg(2+) is required as a cofactor.

Functionally, necessary for normal cell division and for the maintenance of normal septation. This Wolbachia sp. subsp. Drosophila simulans (strain wRi) protein is Probable GTP-binding protein EngB.